A 431-amino-acid chain; its full sequence is MNKLENPLQNDVAGPAPRHRTTQVMVGDIAVGGGAPIVVQSMTNTDTADIDGTIKQVAALARAGSEMVRITVDREEAAAAVPHIRDGLRKLGLTTPLIGDFHYIGHKLLAEYPACAEALDKYRINPGNVGFKAKRDTQFADIVEIAIKNNKAVRIGANWGSLDQELLTKLMDENAASAQPRDVRAVTREAMVQSALLSAARAEEIGLPKTKMVLSAKVSAVQDLIAVYQDLASRSDYAIHLGLTEAGMGSKGIVASSAALGILLQQGIGDTIRISLTPEPGGDRTLEVQVAQELLQTMGFRTFVPLVAACPGCGRTTSTTFQELARSIQDFIRVEMPSWKTRYPGVENLNVAVMGCIVNGPGESKHANIGISLPGTGESPAAPVFVDGEKFRTLRGENIAGDFKALVIDYIEQRYGAAPKPGAAQMVPAAE.

Positions 310, 313, 356, and 363 each coordinate [4Fe-4S] cluster.

The protein belongs to the IspG family. [4Fe-4S] cluster serves as cofactor.

The catalysed reaction is (2E)-4-hydroxy-3-methylbut-2-enyl diphosphate + oxidized [flavodoxin] + H2O + 2 H(+) = 2-C-methyl-D-erythritol 2,4-cyclic diphosphate + reduced [flavodoxin]. The protein operates within isoprenoid biosynthesis; isopentenyl diphosphate biosynthesis via DXP pathway; isopentenyl diphosphate from 1-deoxy-D-xylulose 5-phosphate: step 5/6. In terms of biological role, converts 2C-methyl-D-erythritol 2,4-cyclodiphosphate (ME-2,4cPP) into 1-hydroxy-2-methyl-2-(E)-butenyl 4-diphosphate. This Rhodopseudomonas palustris (strain HaA2) protein is 4-hydroxy-3-methylbut-2-en-1-yl diphosphate synthase (flavodoxin).